Consider the following 250-residue polypeptide: 4-hydroxy-tetrahydrodipicolinate reductase (250 aa).

Residues 10 to 15 (GAKGRI), 78 to 80 (GTT), and 105 to 108 (APNF) each bind NAD(+). The active-site Proton donor/acceptor is His135. His136 is a binding site for (S)-2,3,4,5-tetrahydrodipicolinate. Residue Lys139 is the Proton donor of the active site. Residue 145–146 (GT) participates in (S)-2,3,4,5-tetrahydrodipicolinate binding.

It belongs to the DapB family.

It is found in the cytoplasm. It carries out the reaction (S)-2,3,4,5-tetrahydrodipicolinate + NAD(+) + H2O = (2S,4S)-4-hydroxy-2,3,4,5-tetrahydrodipicolinate + NADH + H(+). The catalysed reaction is (S)-2,3,4,5-tetrahydrodipicolinate + NADP(+) + H2O = (2S,4S)-4-hydroxy-2,3,4,5-tetrahydrodipicolinate + NADPH + H(+). Its pathway is amino-acid biosynthesis; L-lysine biosynthesis via DAP pathway; (S)-tetrahydrodipicolinate from L-aspartate: step 4/4. Catalyzes the conversion of 4-hydroxy-tetrahydrodipicolinate (HTPA) to tetrahydrodipicolinate. In Streptomyces coelicolor (strain ATCC BAA-471 / A3(2) / M145), this protein is 4-hydroxy-tetrahydrodipicolinate reductase.